Consider the following 436-residue polypeptide: Chaperone SurA (436 aa).

Positions 1 to 30 (MKFFQRPERRLKQWGLALLLAASALLPARA) are cleaved as a signal peptide. PpiC domains are found at residues 180–281 (ETEY…KLVD) and 291–389 (VTQT…QVLE).

The protein resides in the periplasm. It carries out the reaction [protein]-peptidylproline (omega=180) = [protein]-peptidylproline (omega=0). Its function is as follows. Chaperone involved in the correct folding and assembly of outer membrane proteins. Recognizes specific patterns of aromatic residues and the orientation of their side chains, which are found more frequently in integral outer membrane proteins. May act in both early periplasmic and late outer membrane-associated steps of protein maturation. This chain is Chaperone SurA, found in Thiobacillus denitrificans (strain ATCC 25259 / T1).